The sequence spans 476 residues: Ureidoglycolate hydrolase (476 aa).

A signal peptide spans 1 to 25; sequence MESLKRFLCSIALLLISLLLPSSLA. The Mn(2+) site is built by His138, Asp149, Glu184, and His254. Residues 183-184, 254-257, His290, Asn340, Arg353, 423-424, and His448 each bind substrate; these read EE, HIEQ, and YH. The involved in dimerization stretch occupies residues 276 to 391; it reads APASLKVEFE…LSEFKIVNQD (116 aa). Residue His448 coordinates Mn(2+).

Belongs to the peptidase M20 family. As to quaternary structure, homodimer. It depends on Mn(2+) as a cofactor. The cofactor is Ni(2+). Co(2+) is required as a cofactor.

It is found in the endoplasmic reticulum. The enzyme catalyses (S)-ureidoglycolate + H2O + 2 H(+) = glyoxylate + 2 NH4(+) + CO2. It functions in the pathway nitrogen metabolism; (S)-allantoin degradation; glyoxylate from (S)-ureidoglycolate: step 1/1. Involved in the catabolism of purine nucleotides. Can use (S)-ureidoglycolate as substrate, but not (R)-ureidoglycolate or allantoate. The sequential activity of AAH, UGLYAH and UAH allows a complete purine breakdown without the intermediate generation of urea. The sequence is that of Ureidoglycolate hydrolase from Arabidopsis thaliana (Mouse-ear cress).